The primary structure comprises 81 residues: Cytotoxin 2 (81 aa).

An N-terminal signal peptide occupies residues methionine 1–threonine 21. 4 disulfide bridges follow: cysteine 24/cysteine 42, cysteine 35/cysteine 59, cysteine 63/cysteine 74, and cysteine 75/cysteine 80.

Belongs to the three-finger toxin family. Short-chain subfamily. Type IA cytotoxin sub-subfamily. In terms of assembly, monomer in solution; Homodimer and oligomer in the presence of negatively charged lipids forming a pore with a size ranging between 20 and 30 Angstroms. As to expression, expressed by the venom gland.

The protein localises to the secreted. Its subcellular location is the target cell membrane. In terms of biological role, shows cytolytic activity on many different cells by forming pore in lipid membranes. In vivo, increases heart rate or kills the animal by cardiac arrest. In addition, it binds to heparin with high affinity, interacts with Kv channel-interacting protein 1 (KCNIP1) in a calcium-independent manner, and binds to integrin alpha-V/beta-3 (ITGAV/ITGB3) with moderate affinity. In Naja kaouthia (Monocled cobra), this protein is Cytotoxin 2.